Consider the following 107-residue polypeptide: Multidrug resistance protein mmr (107 aa).

4 helical membrane passes run 2-19 (IYLY…ATSL), 29-51 (LWPT…LSIS), 58-80 (VAYA…LFLG), and 84-106 (SVMK…LAGA).

Belongs to the drug/metabolite transporter (DMT) superfamily. Small multidrug resistance (SMR) (TC 2.A.7.1) family. Mmr subfamily.

The protein localises to the cell membrane. Multidrug efflux pump. Confers resistance to tetraphenylphosphonium (TPP), erythromycin, ethidium bromide, acriflavine, safranin O and pyronin Y. In Mycobacterium bovis (strain ATCC BAA-935 / AF2122/97), this protein is Multidrug resistance protein mmr (mmr).